A 444-amino-acid chain; its full sequence is Alanyl-tRNA editing protein Aarsd1 (444 aa).

Zn(2+)-binding residues include His109 and His113. Ser174 is subject to Phosphoserine. Positions 209 and 213 each coordinate Zn(2+).

The protein belongs to the class-II aminoacyl-tRNA synthetase family. Alax-L subfamily. Requires Zn(2+) as cofactor.

The protein localises to the cytoplasm. In terms of biological role, functions in trans to edit the amino acid moiety from incorrectly charged tRNA(Ala). This is Alanyl-tRNA editing protein Aarsd1 (AARSD1) from Bos taurus (Bovine).